The chain runs to 103 residues: Cyclotide vibi-I (103 aa).

An N-terminal signal peptide occupies residues 1–9; the sequence is AAFALPAFA. Positions 10-69 are excised as a propeptide; the sequence is SFEKDVITPAALEAVLNRKAPLSNIMMENDAILNVIANVKTVISNPVLEEALLKTNHGVN. The segment at residues 70–99 is a cross-link (cyclopeptide (Gly-Asn)); it reads GIPCGESCVWIPCLTSTVGCSCKSKVCYRN. Disulfide bonds link Cys73–Cys89, Cys77–Cys91, and Cys82–Cys96. A propeptide spanning residues 100-103 is cleaved from the precursor; it reads SLDN.

Post-translationally, this is a cyclic peptide.

Its function is as follows. Probably participates in a plant defense mechanism. In Viola biflora (Yellow wood violet), this protein is Cyclotide vibi-I.